The primary structure comprises 57 residues: Large ribosomal subunit protein bL32 (57 aa).

Positions 1 to 16 (MAVQKSRKTPSRRGMR) are enriched in basic residues. A disordered region spans residues 1–37 (MAVQKSRKTPSRRGMRRSHDALSTTAITVDETTGELH). A compositionally biased stretch (polar residues) spans 21-31 (ALSTTAITVDE).

It belongs to the bacterial ribosomal protein bL32 family.

This is Large ribosomal subunit protein bL32 from Hydrogenovibrio crunogenus (strain DSM 25203 / XCL-2) (Thiomicrospira crunogena).